A 666-amino-acid chain; its full sequence is DNA ligase (666 aa).

Residues 31-35, 80-81, and glutamate 111 contribute to the NAD(+) site; these read DYDFD and SL. Lysine 113 serves as the catalytic N6-AMP-lysine intermediate. Residues arginine 134, glutamate 170, lysine 285, and lysine 309 each coordinate NAD(+). Cysteine 403, cysteine 406, cysteine 421, and cysteine 427 together coordinate Zn(2+). The 80-residue stretch at 587–666 folds into the BRCT domain; the sequence is VVSNKLLGKI…ESDFSALLTS (80 aa).

The protein belongs to the NAD-dependent DNA ligase family. LigA subfamily. Requires Mg(2+) as cofactor. The cofactor is Mn(2+).

The enzyme catalyses NAD(+) + (deoxyribonucleotide)n-3'-hydroxyl + 5'-phospho-(deoxyribonucleotide)m = (deoxyribonucleotide)n+m + AMP + beta-nicotinamide D-nucleotide.. Its function is as follows. DNA ligase that catalyzes the formation of phosphodiester linkages between 5'-phosphoryl and 3'-hydroxyl groups in double-stranded DNA using NAD as a coenzyme and as the energy source for the reaction. It is essential for DNA replication and repair of damaged DNA. The sequence is that of DNA ligase from Flavobacterium psychrophilum (strain ATCC 49511 / DSM 21280 / CIP 103535 / JIP02/86).